Here is a 207-residue protein sequence, read N- to C-terminus: Small ribosomal subunit protein uS4 (207 aa).

The segment at 31-51 (KCKLDSKPGQHGRTSGARTSD) is disordered. Residues 97 to 162 (SRLDNVVYRM…QGRIRESLDL (66 aa)) enclose the S4 RNA-binding domain.

The protein belongs to the universal ribosomal protein uS4 family. As to quaternary structure, part of the 30S ribosomal subunit. Contacts protein S5. The interaction surface between S4 and S5 is involved in control of translational fidelity.

In terms of biological role, one of the primary rRNA binding proteins, it binds directly to 16S rRNA where it nucleates assembly of the body of the 30S subunit. Functionally, with S5 and S12 plays an important role in translational accuracy. This Bordetella bronchiseptica (strain ATCC BAA-588 / NCTC 13252 / RB50) (Alcaligenes bronchisepticus) protein is Small ribosomal subunit protein uS4.